The sequence spans 506 residues: Cytochrome P450 4B1 (506 aa).

Glu310 lines the heme pocket. Ser431 is subject to Phosphoserine. A heme-binding site is contributed by Cys448.

It belongs to the cytochrome P450 family. Heme serves as cofactor.

It localises to the endoplasmic reticulum membrane. Its subcellular location is the microsome membrane. The catalysed reaction is an organic molecule + reduced [NADPH--hemoprotein reductase] + O2 = an alcohol + oxidized [NADPH--hemoprotein reductase] + H2O + H(+). Cytochromes P450 are a group of heme-thiolate monooxygenases. In liver microsomes, this enzyme is involved in an NADPH-dependent electron transport pathway. It oxidizes a variety of structurally unrelated compounds, including steroids, fatty acids, and xenobiotics. The sequence is that of Cytochrome P450 4B1 (CYP4B1) from Oryctolagus cuniculus (Rabbit).